The following is a 915-amino-acid chain: Hexokinase HKDC1 (915 aa).

The tract at residues 1–20 is mitochondrial-binding peptide (MBP); that stretch reads MFAVHLVAFYFTKLKEDQIK. Hexokinase domains are found at residues 16-458 and 464-903; these read EDQI…MVTA and QAQR…LITA. ATP-binding positions include Arg-30 and 84–89; that span reads DLGGSK. The tract at residues 73–207 is hexokinase small subdomain 1; that stretch reads DGSENGEFLS…DLDVDILALV (135 aa). 84-91 provides a ligand contact to D-glucose 6-phosphate; sequence DLGGSKFR. Residues Ser-155, 172-173, and 208-209 each bind D-glucose; these read TK and ND. Residues 208 to 447 form a hexokinase large subdomain 1 region; the sequence is NDTVGTMMTC…CDVRFLLSES (240 aa). 2 residues coordinate D-glucose 6-phosphate: Asp-209 and Thr-232. Residues Asn-235, Glu-260, and 291–294 contribute to the D-glucose site; that span reads QLFE. 413–415 lines the D-glucose 6-phosphate pocket; that stretch reads DGT. Position 425–426 (425–426) interacts with ATP; that stretch reads KR. Residues Ser-449 and 532-536 contribute to the D-glucose 6-phosphate site; that span reads DLGGT. The tract at residues 521 to 652 is hexokinase small subdomain 2; sequence DGTEKGKFLA…EFDLDIVAIV (132 aa). 532 to 537 is a binding site for ATP; it reads DLGGTN. D-glucose contacts are provided by residues 600–601, 617–618, and 653–654; these read SF, TK, and ND. Positions 653–892 are hexokinase large subdomain 2; sequence NDTVGTMMTC…CDVTFMLSED (240 aa). Asp-654 and Thr-677 together coordinate D-glucose 6-phosphate. Position 677 (Thr-677) interacts with ATP. Residues 679–680, Glu-705, and Glu-739 each bind D-glucose; that span reads SN. ATP contacts are provided by residues 744–745, 781–785, and 860–864; these read GM, TKFLS, and TLYKL. D-glucose 6-phosphate is bound by residues 858-860 and Ser-894; that span reads DGT.

This sequence belongs to the hexokinase family. Widely expressed. Detected in retina, brain, cerebellum, liver, lung, kidney, spleen, pancreas and intestine.

The protein resides in the cytoplasm. It localises to the mitochondrion membrane. It is found in the photoreceptor inner segment. The enzyme catalyses a D-hexose + ATP = a D-hexose 6-phosphate + ADP + H(+). It carries out the reaction D-glucose + ATP = D-glucose 6-phosphate + ADP + H(+). It functions in the pathway carbohydrate metabolism; hexose metabolism. Its pathway is carbohydrate degradation; glycolysis; D-glyceraldehyde 3-phosphate and glycerone phosphate from D-glucose: step 1/4. Its function is as follows. Catalyzes the phosphorylation of hexose to hexose 6-phosphate, although at very low level compared to other hexokinases. Has low glucose phosphorylating activity compared to other hexokinases. Involved in glucose homeostasis and hepatic lipid accumulation. Required to maintain whole-body glucose homeostasis during pregnancy; however additional evidences are required to confirm this role. This chain is Hexokinase HKDC1, found in Mus musculus (Mouse).